The primary structure comprises 238 residues: Phosphoribosylaminoimidazole-succinocarboxamide synthase (238 aa).

It belongs to the SAICAR synthetase family.

It catalyses the reaction 5-amino-1-(5-phospho-D-ribosyl)imidazole-4-carboxylate + L-aspartate + ATP = (2S)-2-[5-amino-1-(5-phospho-beta-D-ribosyl)imidazole-4-carboxamido]succinate + ADP + phosphate + 2 H(+). It functions in the pathway purine metabolism; IMP biosynthesis via de novo pathway; 5-amino-1-(5-phospho-D-ribosyl)imidazole-4-carboxamide from 5-amino-1-(5-phospho-D-ribosyl)imidazole-4-carboxylate: step 1/2. This is Phosphoribosylaminoimidazole-succinocarboxamide synthase from Marinomonas sp. (strain MWYL1).